The primary structure comprises 764 residues: 1,4-alpha-glucan branching enzyme GlgB (764 aa).

The interval 1 to 46 (MSAARQPSPTVRDKAAPEPAAPAAPKGARAPRARRAAPPHGVRPAP) is disordered. Residues 17–28 (PEPAAPAAPKGA) show a composition bias toward low complexity. Catalysis depends on aspartate 440, which acts as the Nucleophile. Glutamate 493 functions as the Proton donor in the catalytic mechanism.

Belongs to the glycosyl hydrolase 13 family. GlgB subfamily. Monomer.

The enzyme catalyses Transfers a segment of a (1-&gt;4)-alpha-D-glucan chain to a primary hydroxy group in a similar glucan chain.. It functions in the pathway glycan biosynthesis; glycogen biosynthesis. Functionally, catalyzes the formation of the alpha-1,6-glucosidic linkages in glycogen by scission of a 1,4-alpha-linked oligosaccharide from growing alpha-1,4-glucan chains and the subsequent attachment of the oligosaccharide to the alpha-1,6 position. This chain is 1,4-alpha-glucan branching enzyme GlgB (glgB), found in Kitasatospora aureofaciens (Streptomyces aureofaciens).